An 838-amino-acid polypeptide reads, in one-letter code: MFTFIPITHPTSDTKHPLLLVQSAHGEKYFFGKIGEGSQRSLTENKIRISKLKDIFLTGELNWSDIGGLPGMILTIADQGKSNLVLHYGNDILNYIVSTWRYFVFRFGIDLNDHIMKDKEVYKDKIIAVKSFNVLKNGGEDRLGVFDSFQKGVLRSIVAKMFPKHAPTDRYDPSSDPHLNVELPDLDAKVEVSTNYEISFSPVRGKFKVEEAIKLGVPKGPLFAKLTKGQTITLDNGIVVTPEQVLENERHFAKVLILDIPDDLYLNAFVEKFKDYDCAELGMVYYFLGDEVTINDNLFAFIDIFEKNNYGKVNHMISHNKISPNTISFFGSALTTLKLKALQVNNYNLPKTDRVFSKDFYDRFDTPLSRGTSMCKSQEEPLNTIIEKDNIHIFSQNKTVTFEPFRMNEEPMKCNINGEVADFSWQEIFEEHVKPLEFPLADVDTVINNQLHVDNFNNSAEKKKHVEIITLGTGSALPSKYRNVVSTLVKVPFTDADGNTINRNIMLDAGENTLGTIHRMFSQLAVKSIFQDLKMIYLSHLHADHHLGIISVLNEWYKYNKDDETSYIYVVTPWQYHKFVNEWLVLENKEILKRIKYISCEHFINDSFVRMQTQSVPLAEFNEILKENSNQESNRKLELDRDSSYRDVDLIRQMYEDLSIEYFQTCRAIHCDWAYSNSITFRMDENNEHNTFKVSYSGDTRPNIEKFSLEIGYNSDLLIHEATLENQLLEDAVKKKHCTINEAIGVSNKMNARKLILTHFSQRYPKLPQLDNNIDVMAREFCFAFDSMIVDYEKIGEQQRIFPLLNKAFVEEKEEEEDVDDVESVQDLEVKLKKHKKN.

Phosphoserine is present on serine 824.

The protein belongs to the RNase Z family. In terms of assembly, homodimer. Zn(2+) is required as a cofactor.

Its subcellular location is the cytoplasm. The protein resides in the nucleus. It catalyses the reaction Endonucleolytic cleavage of RNA, removing extra 3' nucleotides from tRNA precursor, generating 3' termini of tRNAs. A 3'-hydroxy group is left at the tRNA terminus and a 5'-phosphoryl group is left at the trailer molecule.. In terms of biological role, zinc phosphodiesterase, which displays some tRNA 3'-processing endonuclease activity. Probably involved in tRNA maturation, by removing a 3'-trailer from precursor tRNA. In Saccharomyces cerevisiae (strain ATCC 204508 / S288c) (Baker's yeast), this protein is Ribonuclease Z (TRZ1).